A 181-amino-acid polypeptide reads, in one-letter code: Large ribosomal subunit protein uL5 (181 aa).

The protein belongs to the universal ribosomal protein uL5 family. Part of the 50S ribosomal subunit; part of the 5S rRNA/L5/L18/L25 subcomplex. Contacts the 5S rRNA and the P site tRNA. Forms a bridge to the 30S subunit in the 70S ribosome.

This is one of the proteins that bind and probably mediate the attachment of the 5S RNA into the large ribosomal subunit, where it forms part of the central protuberance. In the 70S ribosome it contacts protein S13 of the 30S subunit (bridge B1b), connecting the 2 subunits; this bridge is implicated in subunit movement. Contacts the P site tRNA; the 5S rRNA and some of its associated proteins might help stabilize positioning of ribosome-bound tRNAs. This Colwellia psychrerythraea (strain 34H / ATCC BAA-681) (Vibrio psychroerythus) protein is Large ribosomal subunit protein uL5.